The following is a 257-amino-acid chain: Imidazole glycerol phosphate synthase subunit HisF (257 aa).

Catalysis depends on residues Asp11 and Asp130.

Belongs to the HisA/HisF family. Heterodimer of HisH and HisF.

It localises to the cytoplasm. It catalyses the reaction 5-[(5-phospho-1-deoxy-D-ribulos-1-ylimino)methylamino]-1-(5-phospho-beta-D-ribosyl)imidazole-4-carboxamide + L-glutamine = D-erythro-1-(imidazol-4-yl)glycerol 3-phosphate + 5-amino-1-(5-phospho-beta-D-ribosyl)imidazole-4-carboxamide + L-glutamate + H(+). The protein operates within amino-acid biosynthesis; L-histidine biosynthesis; L-histidine from 5-phospho-alpha-D-ribose 1-diphosphate: step 5/9. IGPS catalyzes the conversion of PRFAR and glutamine to IGP, AICAR and glutamate. The HisF subunit catalyzes the cyclization activity that produces IGP and AICAR from PRFAR using the ammonia provided by the HisH subunit. This is Imidazole glycerol phosphate synthase subunit HisF from Pseudoalteromonas translucida (strain TAC 125).